We begin with the raw amino-acid sequence, 88 residues long: MNEKKVECVLTGTVVSSNRDKTITVLIERKVRHPIYKKYIKRSTKVHAHDDKNECICGDLVRVVEAKPFSKTKHWSLLEVVERLVSVD.

Belongs to the universal ribosomal protein uS17 family. Part of the 30S ribosomal subunit.

One of the primary rRNA binding proteins, it binds specifically to the 5'-end of 16S ribosomal RNA. The polypeptide is Small ribosomal subunit protein uS17 (Vesicomyosocius okutanii subsp. Calyptogena okutanii (strain HA)).